Here is a 201-residue protein sequence, read N- to C-terminus: Recombination protein RecR (201 aa).

Residues 60 to 75 form a C4-type zinc finger; it reads CSCCGNVDTIDPCTVC. One can recognise a Toprim domain in the interval 83–178; it reads AVIIVVEDVA…RITRLAHGVP (96 aa).

It belongs to the RecR family.

In terms of biological role, may play a role in DNA repair. It seems to be involved in an RecBC-independent recombinational process of DNA repair. It may act with RecF and RecO. The sequence is that of Recombination protein RecR from Rhizobium meliloti (strain 1021) (Ensifer meliloti).